Reading from the N-terminus, the 95-residue chain is Large ribosomal subunit protein uL23 (95 aa).

Belongs to the universal ribosomal protein uL23 family. In terms of assembly, part of the 50S ribosomal subunit. Contacts protein L29, and trigger factor when it is bound to the ribosome.

One of the early assembly proteins it binds 23S rRNA. One of the proteins that surrounds the polypeptide exit tunnel on the outside of the ribosome. Forms the main docking site for trigger factor binding to the ribosome. This Desulfitobacterium hafniense (strain Y51) protein is Large ribosomal subunit protein uL23.